We begin with the raw amino-acid sequence, 109 residues long: Protein TAR1 (109 aa).

Residues 62–109 (HFTNNWDPRHTGFSPSMTSCSKEHRQGPATKLPSSNYNSDVEDARFQI) are disordered.

It is found in the mitochondrion. In terms of biological role, may be involved in mtDNA stability or mitochondrial gene expression regulation at the post-transcriptional level. The chain is Protein TAR1 (TAR1-A) from Kluyveromyces lactis (strain ATCC 8585 / CBS 2359 / DSM 70799 / NBRC 1267 / NRRL Y-1140 / WM37) (Yeast).